Consider the following 298-residue polypeptide: Quinolinate synthase (298 aa).

Iminosuccinate-binding residues include histidine 19 and serine 36. Cysteine 81 is a binding site for [4Fe-4S] cluster. Iminosuccinate-binding positions include 107-109 and serine 124; that span reads YVN. Cysteine 168 serves as a coordination point for [4Fe-4S] cluster. Residues 193–195 and threonine 210 contribute to the iminosuccinate site; that span reads HPE. Position 254 (cysteine 254) interacts with [4Fe-4S] cluster.

It belongs to the quinolinate synthase family. Type 2 subfamily. Requires [4Fe-4S] cluster as cofactor.

The protein localises to the cytoplasm. It catalyses the reaction iminosuccinate + dihydroxyacetone phosphate = quinolinate + phosphate + 2 H2O + H(+). It participates in cofactor biosynthesis; NAD(+) biosynthesis; quinolinate from iminoaspartate: step 1/1. Functionally, catalyzes the condensation of iminoaspartate with dihydroxyacetone phosphate to form quinolinate. This chain is Quinolinate synthase, found in Thermotoga sp. (strain RQ2).